The chain runs to 712 residues: Transferrin-binding protein B (712 aa).

The N-terminal stretch at 1 to 20 is a signal peptide; sequence MNNPLVNQAAMVLPVFLLSA. Cysteine 21 carries the N-palmitoyl cysteine lipid modification. A lipid anchor (S-diacylglycerol cysteine) is attached at cysteine 21. An N-terminal handle domain region spans residues 59 to 196; that stretch reads GGYGFAMRLK…YHGKEPSRQL (138 aa). Disordered regions lie at residues 78–104, 123–144, 223–256, 309–338, 364–398, 442–495, and 689–712; these read EDEVKLDESDWEATGLPDEPKELPKRQ, PYLKPSNHQNGNTGNGINQPKN, IIQPSKSQGDRYSGFSGDDGEEYSNKNKSTLTDG, NGKATATDKPQQNSETKEHPFVSDSSSLSG, SAKTKDKPANGNTAAASGGTDAAASNGAAGTSSEN, ASES…GDTN, and NATNASGNSSATVVFGAKRQQPVR. Basic and acidic residues predominate over residues 95–104; the sequence is DEPKELPKRQ. Over residues 128–144 the composition is skewed to polar residues; sequence SNHQNGNTGNGINQPKN. Residues 197–367 form an N-terminal beta barrel domain region; that stretch reads PASGKITYKG…KVAVVGSAKT (171 aa). Low complexity-rich tracts occupy residues 372–398 and 446–459; these read ANGNTAAASGGTDAAASNGAAGTSSEN and GNNQANQGTNGGTA. The tract at residues 389–555 is C-terminal handle domain; it reads NGAAGTSSEN…SMFLQGERTD (167 aa). Basic and acidic residues predominate over residues 462-475; that stretch reads RKFDHTPESDKKDA. 2 stretches are compositionally biased toward polar residues: residues 477-495 and 689-700; these read AGTQTNGAQTASNTAGDTN and NATNASGNSSAT. The tract at residues 556–712 is C-terminal beta barrel domain; it reads EKEIPSEQNI…FGAKRQQPVR (157 aa).

This sequence belongs to the TbpB family. Isotype II subfamily. In terms of assembly, binds only human holo-transferrin (TF), via the TF C-terminus. Forms a large complex with TF and TbpA. Interacts via its C-terminal domain with Slam1.

The protein localises to the cell outer membrane. Its subcellular location is the cell surface. Functionally, neisseria acquires iron by extracting it from serum transferrin (TF) in its human host. Acts as a TF receptor and is required for TF utilization. Involved in the initial capture of TF. Helps select only those TF molecules that can be used as an iron source and concentrates them on the cell surface, maintaining the iron-loaded status of the TF C-terminal lobe until its delivery to TbpA. This is Transferrin-binding protein B from Neisseria meningitidis serogroup B (strain ATCC BAA-335 / MC58).